We begin with the raw amino-acid sequence, 305 residues long: 4-diphosphocytidyl-2-C-methyl-D-erythritol kinase (305 aa).

Lysine 18 is a catalytic residue. 103 to 113 contributes to the ATP binding site; the sequence is PYGAGLGGGSS. Aspartate 145 is an active-site residue.

The protein belongs to the GHMP kinase family. IspE subfamily.

It carries out the reaction 4-CDP-2-C-methyl-D-erythritol + ATP = 4-CDP-2-C-methyl-D-erythritol 2-phosphate + ADP + H(+). Its pathway is isoprenoid biosynthesis; isopentenyl diphosphate biosynthesis via DXP pathway; isopentenyl diphosphate from 1-deoxy-D-xylulose 5-phosphate: step 3/6. Functionally, catalyzes the phosphorylation of the position 2 hydroxy group of 4-diphosphocytidyl-2C-methyl-D-erythritol. The protein is 4-diphosphocytidyl-2-C-methyl-D-erythritol kinase of Lawsonia intracellularis (strain PHE/MN1-00).